A 1454-amino-acid chain; its full sequence is ABC transporter G family member 43 (1454 aa).

Residues 23–47 form a disordered region; that stretch reads ARSLRDGDDPFRRSAAASRRDAGDD. Residues 25–44 show a composition bias toward basic and acidic residues; that stretch reads SLRDGDDPFRRSAAASRRDA. A glycan (N-linked (GlcNAc...) asparagine) is linked at N163. Positions 170–444 constitute an ABC transporter 1 domain; sequence EGLVSLFISS…FESAGFRCPE (275 aa). 204–211 contacts ATP; it reads GPPSSGKS. N-linked (GlcNAc...) asparagine glycosylation is present at N393. The ABC transmembrane type-2 1 domain maps to 524–735; sequence LKAVMSREWL…SNNALSVNEF (212 aa). 6 consecutive transmembrane segments (helical) span residues 540–560, 577–597, 613–630, 637–656, 659–679, and 684–704; these read FLFI…MTLF, VGAL…ELQL, FFPA…KVPL, LWIV…GRFF, FLAY…LGAI, and VVAN…GGFL. Residue N745 is glycosylated (N-linked (GlcNAc...) asparagine). Residues 775-795 form a helical membrane-spanning segment; that stretch reads IGAMIGFMIVFNILYLCALTF. Positions 804–823 are disordered; it reads TVVSDDDTKSELEAESNQEQ. Residues N829 and N832 are each glycosylated (N-linked (GlcNAc...) asparagine). One can recognise an ABC transporter 2 domain in the interval 852-1104; sequence LSFNHMNYYV…ILVEYFEAIP (253 aa). Position 897 to 904 (897 to 904) interacts with ATP; sequence GVSGAGKT. Residue N951 is glycosylated (N-linked (GlcNAc...) asparagine). Positions 1178 to 1391 constitute an ABC transmembrane type-2 2 domain; that stretch reads QCVANTWKQF…TIYGVIASQF (214 aa). A run of 7 helical transmembrane segments spans residues 1196–1216, 1236–1256, 1284–1304, 1314–1334, 1341–1361, 1372–1392, and 1423–1443; these read YNAM…TVFW, YAAV…VVSV, FCYS…MIGY, FLFF…MLVA, LAAV…GFII, WFYW…SQFA, and FLGY…FLFG.

This sequence belongs to the ABC transporter superfamily. ABCG family. PDR (TC 3.A.1.205) subfamily. As to expression, specifically expressed in the vasculature of roots, stems, panicles, sheaths and leaves.

It localises to the cell membrane. Functionally, ABC transporter modulating cadmium (Cd) import, thus controlling Cd(2+) accumulation to prevent phytotoxicity. Confers high tolerance to Cd in yeast. Prevents leaf bacteria proliferation, such as Xanthomonas oryzae pv. oryzicola (Xoc) RS105 and X.oryzae pv. oryzae (Xoo) PXO99, by triggering Cd accumulation, which in turn impairs bacterial virulence factors. The sequence is that of ABC transporter G family member 43 from Oryza sativa subsp. japonica (Rice).